A 217-amino-acid polypeptide reads, in one-letter code: Large ribosomal subunit protein uL3 (217 aa).

The segment covering 134 to 146 has biased composition (polar residues); that stretch reads GRATHGNSRSHNV. Positions 134 to 154 are disordered; it reads GRATHGNSRSHNVPGSIGMAQ. Gln-154 is modified (N5-methylglutamine).

The protein belongs to the universal ribosomal protein uL3 family. As to quaternary structure, part of the 50S ribosomal subunit. Forms a cluster with proteins L14 and L19. Post-translationally, methylated by PrmB.

Its function is as follows. One of the primary rRNA binding proteins, it binds directly near the 3'-end of the 23S rRNA, where it nucleates assembly of the 50S subunit. The chain is Large ribosomal subunit protein uL3 from Burkholderia cenocepacia (strain HI2424).